The chain runs to 354 residues: Putative Xaa-Pro aminopeptidase (354 aa).

Asp-213, Asp-224, His-290, Glu-319, and Glu-333 together coordinate Mn(2+).

This sequence belongs to the peptidase M24B family. The cofactor is Mn(2+).

It carries out the reaction Release of any N-terminal amino acid, including proline, that is linked to proline, even from a dipeptide or tripeptide.. The chain is Putative Xaa-Pro aminopeptidase (pepP) from Mycoplasma pneumoniae (strain ATCC 29342 / M129 / Subtype 1) (Mycoplasmoides pneumoniae).